Reading from the N-terminus, the 396-residue chain is Serpin-ZXA (396 aa).

Positions 343 to 367 are RCL; it reads GTEAAAATAAVITLRSAPIAEDFVA.

It belongs to the serpin family.

Probable serine protease inhibitor. The protein is Serpin-ZXA of Oryza sativa subsp. japonica (Rice).